Here is a 342-residue protein sequence, read N- to C-terminus: ATPase asna-1 (342 aa).

Residue 26 to 33 (KGGVGKTT) coordinates ATP. Aspartate 55 is a catalytic residue. Residues glutamate 243 and asparagine 270 each coordinate ATP. Residues cysteine 285 and cysteine 288 each coordinate Zn(2+).

It belongs to the arsA ATPase family. Homodimer.

It localises to the cytoplasm. Its subcellular location is the endoplasmic reticulum. In terms of biological role, ATPase required for the post-translational delivery of tail-anchored (TA) proteins to the endoplasmic reticulum. Recognizes and selectively binds the transmembrane domain of TA proteins in the cytosol. This complex then targets to the endoplasmic reticulum by membrane-bound receptors, where the tail-anchored protein is released for insertion. This process is regulated by ATP binding and hydrolysis. ATP binding drives the homodimer towards the closed dimer state, facilitating recognition of newly synthesized TA membrane proteins. ATP hydrolysis is required for insertion. Subsequently, the homodimer reverts towards the open dimer state, lowering its affinity for the membrane-bound receptor, and returning it to the cytosol to initiate a new round of targeting. May be involved in insulin signaling. This is ATPase asna-1 from Caenorhabditis elegans.